We begin with the raw amino-acid sequence, 445 residues long: DNA repair protein RadA (445 aa).

The C4-type zinc finger occupies 10–27 (CSNCANISNKWSGQCFDC). 90-97 (GEPGIGKS) is a binding site for ATP. Residues 249–253 (KNRFG) carry the RadA KNRFG motif motif. The tract at residues 348 to 445 (EIYLSIAGGL…HLQELKEIIK (98 aa)) is lon-protease-like.

Belongs to the RecA family. RadA subfamily.

Functionally, DNA-dependent ATPase involved in processing of recombination intermediates, plays a role in repairing DNA breaks. Stimulates the branch migration of RecA-mediated strand transfer reactions, allowing the 3' invading strand to extend heteroduplex DNA faster. Binds ssDNA in the presence of ADP but not other nucleotides, has ATPase activity that is stimulated by ssDNA and various branched DNA structures, but inhibited by SSB. Does not have RecA's homology-searching function. In Rickettsia prowazekii (strain Madrid E), this protein is DNA repair protein RadA.